Consider the following 697-residue polypeptide: Serine/threonine-protein kinase Nek8 (697 aa).

The region spanning 4 to 263 (YEKTKVVGRG…AHAICIRPLL (260 aa)) is the Protein kinase domain. ATP is bound by residues 10-18 (VGRGAFGIV) and lysine 33. The active-site Proton acceptor is the aspartate 128. Threonine 162 is subject to Phosphothreonine; by autocatalysis. RCC1 repeat units follow at residues 417–468 (GIIM…VTNE), 469–520 (REVF…MSTQ), 521–586 (HQIL…VTEK), 587–636 (GQCF…IGAE), and 637–689 (GEVY…AVKP).

This sequence belongs to the protein kinase superfamily. NEK Ser/Thr protein kinase family. NIMA subfamily. Requires Mg(2+) as cofactor.

Its subcellular location is the cytoplasm. The protein resides in the cytoskeleton. The protein localises to the cell projection. It localises to the cilium. It is found in the cilium axoneme. Its subcellular location is the microtubule organizing center. The protein resides in the centrosome. The catalysed reaction is L-seryl-[protein] + ATP = O-phospho-L-seryl-[protein] + ADP + H(+). It carries out the reaction L-threonyl-[protein] + ATP = O-phospho-L-threonyl-[protein] + ADP + H(+). Required for renal tubular integrity. May regulate local cytoskeletal structure in kidney tubule epithelial cells. May regulate ciliary biogenesis through targeting of proteins to the cilia. Plays a role in organogenesis and is involved in the regulation of the Hippo signaling pathway. The polypeptide is Serine/threonine-protein kinase Nek8 (nek8) (Danio rerio (Zebrafish)).